Consider the following 315-residue polypeptide: GTP cyclohydrolase MptA (315 aa).

The protein belongs to the GTP cyclohydrolase IV family. As to quaternary structure, homodimer. The cofactor is Fe(2+).

The enzyme catalyses GTP + H2O = 7,8-dihydroneopterin 2',3'-cyclic phosphate + formate + diphosphate + H(+). The protein operates within cofactor biosynthesis; 5,6,7,8-tetrahydromethanopterin biosynthesis. In terms of biological role, converts GTP to 7,8-dihydro-D-neopterin 2',3'-cyclic phosphate, the first intermediate in the biosynthesis of coenzyme methanopterin. In Methanococcus maripaludis (strain C7 / ATCC BAA-1331), this protein is GTP cyclohydrolase MptA.